The sequence spans 415 residues: Serine hydroxymethyltransferase 1 (415 aa).

(6S)-5,6,7,8-tetrahydrofolate-binding positions include L122 and 126–128; that span reads GHL. K230 is subject to N6-(pyridoxal phosphate)lysine.

The protein belongs to the SHMT family. Homodimer. Pyridoxal 5'-phosphate is required as a cofactor.

The protein resides in the cytoplasm. It carries out the reaction (6R)-5,10-methylene-5,6,7,8-tetrahydrofolate + glycine + H2O = (6S)-5,6,7,8-tetrahydrofolate + L-serine. It participates in one-carbon metabolism; tetrahydrofolate interconversion. It functions in the pathway amino-acid biosynthesis; glycine biosynthesis; glycine from L-serine: step 1/1. In terms of biological role, catalyzes the reversible interconversion of serine and glycine with tetrahydrofolate (THF) serving as the one-carbon carrier. This reaction serves as the major source of one-carbon groups required for the biosynthesis of purines, thymidylate, methionine, and other important biomolecules. Also exhibits THF-independent aldolase activity toward beta-hydroxyamino acids, producing glycine and aldehydes, via a retro-aldol mechanism. The sequence is that of Serine hydroxymethyltransferase 1 from Burkholderia mallei (strain ATCC 23344).